The following is a 46-amino-acid chain: L-amino-acid oxidase (46 aa).

Residue asparagine 31 is glycosylated (N-linked (GlcNAc...) asparagine).

The protein belongs to the flavin monoamine oxidase family. FIG1 subfamily. FAD is required as a cofactor.

It is found in the secreted. Its subcellular location is the lysosome. It localises to the cytoplasmic vesicle. The protein localises to the secretory vesicle. The protein resides in the acrosome. The catalysed reaction is an L-alpha-amino acid + O2 + H2O = a 2-oxocarboxylate + H2O2 + NH4(+). The enzyme catalyses L-tryptophan + O2 + H2O = indole-3-pyruvate + H2O2 + NH4(+). It catalyses the reaction L-phenylalanine + O2 + H2O = 3-phenylpyruvate + H2O2 + NH4(+). It carries out the reaction L-tyrosine + O2 + H2O = 3-(4-hydroxyphenyl)pyruvate + H2O2 + NH4(+). The catalysed reaction is L-arginine + O2 + H2O = 5-guanidino-2-oxopentanoate + H2O2 + NH4(+). It participates in amino-acid degradation; L-tryptophan degradation via pyruvate pathway. Secreted L-amino-acid oxidase that acts as a key immunoregulator. Has preference for L-aromatic amino acids: converts phenylalanine (Phe), tyrosine (Tyr) and tryptophan (Trp) to phenylpyruvic acid (PP), hydroxyphenylpyruvic acid (HPP), and indole-3-pyruvic acid (I3P), respectively. Also has weak L-arginine oxidase activity. Acts as a negative regulator of anti-tumor immunity by mediating Trp degradation via an indole pyruvate pathway that activates the transcription factor AHR. IL4I1-mediated Trp catabolism generates I3P, giving rise to indole metabolites (indole-3-acetic acid (IAA) and indole-3-aldehyde (I3A)) and kynurenic acid, which act as ligands for AHR, a ligand-activated transcription factor that plays important roles in immunity and cancer. AHR activation by indoles following IL4I1-mediated Trp degradation enhances tumor progression by promoting cancer cell motility and suppressing adaptive immunity. Also has an immunoregulatory function in some immune cells, probably by mediating Trp degradation and promoting downstream AHR activation: inhibits T-cell activation and proliferation, promotes the differentiation of naive CD4(+) T-cells into FOXP3(+) regulatory T-cells (Treg) and regulates the development and function of B-cells. Also regulates M2 macrophage polarization by inhibiting T-cell activation. Also has antibacterial properties by inhibiting growth of Gram negative and Gram positive bacteria through the production of NH4(+) and H2O2. This chain is L-amino-acid oxidase, found in Mus spretus (Western Mediterranean mouse).